The sequence spans 444 residues: UDP-N-acetylmuramoylalanine--D-glutamate ligase (444 aa).

113–119 (GSNGKST) serves as a coordination point for ATP.

It belongs to the MurCDEF family.

Its subcellular location is the cytoplasm. It catalyses the reaction UDP-N-acetyl-alpha-D-muramoyl-L-alanine + D-glutamate + ATP = UDP-N-acetyl-alpha-D-muramoyl-L-alanyl-D-glutamate + ADP + phosphate + H(+). The protein operates within cell wall biogenesis; peptidoglycan biosynthesis. Cell wall formation. Catalyzes the addition of glutamate to the nucleotide precursor UDP-N-acetylmuramoyl-L-alanine (UMA). This Blochmanniella floridana protein is UDP-N-acetylmuramoylalanine--D-glutamate ligase.